A 607-amino-acid polypeptide reads, in one-letter code: MTQTFDPSAFLATCSGRPGVYRMFDADATLLYVGKAKNLKKRLASYFRKTGHAPKTGALVARIAQIETTITNNETEALLLEQTLIKEWRPPYNILLRDDKSYPYVFLSDGTYPRLSIHRGAKKAKGRYFGPYPSAGAIRESLSLLQKTFQVRQCEDSFFKNRNRPCLQYQIKRCKGPCVGLVEPEVYAEDVRHSVMFLEGRSNALSDELNASMEKAAMALDFERAAELRDQVALLRRVQDQQSMDGGTGDVDVVAAFVNPGGACVHLISVRGGRVLGSKNFFPQVGIEEEVGEVMSAFLAQYFLGGVDRELPSEVIVNVVNEDFPALIDAIEESRGREMTISHRVRGTRARWQQLAVTNAEQALAARLANRQHVASRFEALAVVLNLDEPPMRLECYDISHSSGEATVASCVVFGPEGPIKSDYRRFNIEGVTAGDDYAAMHQALTRRYSRIKAGEGKLPDVLLVDGGKGQMSMARDVLNELQVPDLILLGVAKGTTRKAGFETLYLNDAAHEFTLPGDSPALHLIQQIRDEAHRFAITGHRARRGKTRRTSTLEGIAGVGPTRRRDLLKHFGGLQELSRASIDEIAKAPGISKKLAESIYANLHSE.

Positions 16–94 (GRPGVYRMFD…IKEWRPPYNI (79 aa)) constitute a GIY-YIG domain. The UVR domain occupies 203–238 (NALSDELNASMEKAAMALDFERAAELRDQVALLRRV).

Belongs to the UvrC family. In terms of assembly, interacts with UvrB in an incision complex.

The protein resides in the cytoplasm. In terms of biological role, the UvrABC repair system catalyzes the recognition and processing of DNA lesions. UvrC both incises the 5' and 3' sides of the lesion. The N-terminal half is responsible for the 3' incision and the C-terminal half is responsible for the 5' incision. The protein is UvrABC system protein C of Pseudomonas syringae pv. tomato (strain ATCC BAA-871 / DC3000).